Consider the following 130-residue polypeptide: Glycine cleavage system H protein (130 aa).

The 83-residue stretch at 24–106 (IYSVGITEHA…YADGWLFRIR (83 aa)) folds into the Lipoyl-binding domain. N6-lipoyllysine is present on Lys-65.

This sequence belongs to the GcvH family. As to quaternary structure, the glycine cleavage system is composed of four proteins: P, T, L and H. (R)-lipoate serves as cofactor.

The glycine cleavage system catalyzes the degradation of glycine. The H protein shuttles the methylamine group of glycine from the P protein to the T protein. This is Glycine cleavage system H protein from Pectobacterium carotovorum subsp. carotovorum (strain PC1).